Here is a 385-residue protein sequence, read N- to C-terminus: F-box only protein 4 (385 aa).

Serine 11 and serine 46 each carry phosphoserine. Positions 54 to 100 (TSALTRLPVDVQLYILSFLSPHDLCQLGSTDHYWNKTIRDPILWRYF) constitute an F-box domain.

In terms of assembly, homodimer. Part of the SCF (SKP1-CUL1-F-box) E3 ubiquitin-protein ligase complex SCF(FBXO4) formed of CUL1, SKP1, RBX1 and FBXO4. Interacts with TERF1; this interaction is prevented in the presence of GNL3L. Identified in a complex with CRYAB and CCND1. Phosphorylation at Ser-11 varies during the cell cycle. It is low in resting cells and high in the S phase and the G2/M phase of the cell cycle. Phosphorylation is decreased during late G1 phase. Phosphorylation at Ser-11 is important for homodimerization and for optimal ubiquitin ligase activity towards CCND1.

It localises to the cytoplasm. It functions in the pathway protein modification; protein ubiquitination. Its function is as follows. Substrate recognition component of a SCF (SKP1-CUL1-F-box protein) E3 ubiquitin-protein ligase complex that mediates the ubiquitination and subsequent proteasomal degradation of target proteins. Promotes ubiquitination of cyclin-D1 (CCND1) and its subsequent proteasomal degradation. However, it does not act as a major regulator of CCND1 stability during the G1/S transition. Recognizes TERF1 and promotes its ubiquitination together with UBE2D1. Promotes ubiquitination of FXR1 following phosphorylation of FXR1 by GSK3B, leading to FXR1 degradation by the proteasome. In Mus musculus (Mouse), this protein is F-box only protein 4.